Here is a 184-residue protein sequence, read N- to C-terminus: Type-1 fimbrial protein, A chain (184 aa).

The first 23 residues, M1 to A23, serve as a signal peptide directing secretion. Cysteines 46 and 86 form a disulfide.

This sequence belongs to the fimbrial protein family.

The protein resides in the fimbrium. Functionally, fimbriae (also called pili), polar filaments radiating from the surface of the bacterium to a length of 0.5-1.5 micrometers and numbering 100-300 per cell, enable bacteria to colonize the epithelium of specific host organs. The chain is Type-1 fimbrial protein, A chain from Escherichia coli.